The chain runs to 524 residues: Cytochrome P450 6k1 (524 aa).

A heme-binding site is contributed by C464.

The protein belongs to the cytochrome P450 family. Heme serves as cofactor.

It is found in the endoplasmic reticulum membrane. The protein resides in the microsome membrane. In Blattella germanica (German cockroach), this protein is Cytochrome P450 6k1 (CYP6K1).